A 383-amino-acid chain; its full sequence is Probable cell wall hydrolase LytN (383 aa).

Positions 1–49 are cleaved as a signal peptide; it reads MFVYYCKECFIMNKQQSKVRYSIRKVSIGILSISIGMFLALGMSNKAYA. A LysM domain is found at 175-219; sequence QIYTVKKGDTLSAIALKYKTTVSNIQNTNNIANPNLIFIGQKLKV. One can recognise a Peptidase C51 domain in the interval 241-378; the sequence is NSSTLNYLKT…NYENDMIFIR (138 aa).

The protein resides in the secreted. Functionally, probably involved in peptidoglycan hydrolysis. This chain is Probable cell wall hydrolase LytN (lytN), found in Staphylococcus aureus (strain MSSA476).